Here is a 273-residue protein sequence, read N- to C-terminus: ATP synthase subunit delta (273 aa).

It belongs to the ATPase delta chain family. In terms of assembly, F-type ATPases have 2 components, F(1) - the catalytic core - and F(0) - the membrane proton channel. F(1) has five subunits: alpha(3), beta(3), gamma(1), delta(1), epsilon(1). F(0) has three main subunits: a(1), b(2) and c(10-14). The alpha and beta chains form an alternating ring which encloses part of the gamma chain. F(1) is attached to F(0) by a central stalk formed by the gamma and epsilon chains, while a peripheral stalk is formed by the delta and b chains.

It localises to the cell membrane. F(1)F(0) ATP synthase produces ATP from ADP in the presence of a proton or sodium gradient. F-type ATPases consist of two structural domains, F(1) containing the extramembraneous catalytic core and F(0) containing the membrane proton channel, linked together by a central stalk and a peripheral stalk. During catalysis, ATP synthesis in the catalytic domain of F(1) is coupled via a rotary mechanism of the central stalk subunits to proton translocation. Functionally, this protein is part of the stalk that links CF(0) to CF(1). It either transmits conformational changes from CF(0) to CF(1) or is implicated in proton conduction. In Corynebacterium diphtheriae (strain ATCC 700971 / NCTC 13129 / Biotype gravis), this protein is ATP synthase subunit delta.